The primary structure comprises 292 residues: UPF0761 membrane protein Ping_3482 (292 aa).

6 helical membrane-spanning segments follow: residues 43–63, 100–120, 139–159, 179–199, 209–229, and 243–263; these read LLSI…FPVF, MSMM…STID, FTIY…SLAL, LLSL…YTLV, ALIG…LFRL, and ALAV…IVLI.

Belongs to the UPF0761 family.

Its subcellular location is the cell inner membrane. The protein is UPF0761 membrane protein Ping_3482 of Psychromonas ingrahamii (strain DSM 17664 / CCUG 51855 / 37).